The chain runs to 399 residues: Chalcone synthase 2 (399 aa).

Residue Cys-166 is part of the active site.

This sequence belongs to the thiolase-like superfamily. Chalcone/stilbene synthases family.

The catalysed reaction is (E)-4-coumaroyl-CoA + 3 malonyl-CoA + 3 H(+) = 2',4,4',6'-tetrahydroxychalcone + 3 CO2 + 4 CoA. It functions in the pathway secondary metabolite biosynthesis; flavonoid biosynthesis. Functionally, the primary product of this enzyme is 4,2',4',6'-tetrahydroxychalcone (also termed naringenin-chalcone or chalcone) which can under specific conditions spontaneously isomerize into naringenin. Substrate preference is feruloyl-CoA = caffeoyl-CoA &gt;&gt; cinnamoyl-CoA. This is Chalcone synthase 2 (CHS2) from Hordeum vulgare (Barley).